Here is a 388-residue protein sequence, read N- to C-terminus: Chorismate synthase (388 aa).

Residues Arg39 and Arg45 each coordinate NADP(+). Residues 130-132 (RSS), 251-252 (NA), Gly296, 311-315 (KPIPT), and Arg337 contribute to the FMN site.

This sequence belongs to the chorismate synthase family. As to quaternary structure, homotetramer. FMNH2 serves as cofactor.

It carries out the reaction 5-O-(1-carboxyvinyl)-3-phosphoshikimate = chorismate + phosphate. It participates in metabolic intermediate biosynthesis; chorismate biosynthesis; chorismate from D-erythrose 4-phosphate and phosphoenolpyruvate: step 7/7. Functionally, catalyzes the anti-1,4-elimination of the C-3 phosphate and the C-6 proR hydrogen from 5-enolpyruvylshikimate-3-phosphate (EPSP) to yield chorismate, which is the branch point compound that serves as the starting substrate for the three terminal pathways of aromatic amino acid biosynthesis. This reaction introduces a second double bond into the aromatic ring system. The chain is Chorismate synthase from Streptococcus pyogenes serotype M5 (strain Manfredo).